The following is a 118-amino-acid chain: Large ribosomal subunit protein bL19 (118 aa).

Belongs to the bacterial ribosomal protein bL19 family.

Functionally, this protein is located at the 30S-50S ribosomal subunit interface and may play a role in the structure and function of the aminoacyl-tRNA binding site. This is Large ribosomal subunit protein bL19 from Helicobacter hepaticus (strain ATCC 51449 / 3B1).